Consider the following 536-residue polypeptide: L-aspartate oxidase 2 (536 aa).

Residues 22–25 (EGLA) and 51–58 (SSYWAQGG) contribute to the FAD site. Arginine 284 serves as the catalytic Proton donor/acceptor. Residues glutamate 369 and 385 to 386 (SL) contribute to the FAD site.

This sequence belongs to the FAD-dependent oxidoreductase 2 family. NadB subfamily. It depends on FAD as a cofactor.

Its subcellular location is the cytoplasm. It carries out the reaction L-aspartate + O2 = iminosuccinate + H2O2. It functions in the pathway cofactor biosynthesis; NAD(+) biosynthesis; iminoaspartate from L-aspartate (oxidase route): step 1/1. Catalyzes the oxidation of L-aspartate to iminoaspartate, the first step in the de novo biosynthesis of NAD(+). The sequence is that of L-aspartate oxidase 2 (nadB2) from Ralstonia nicotianae (strain ATCC BAA-1114 / GMI1000) (Ralstonia solanacearum).